The primary structure comprises 557 residues: Glucose-6-phosphate isomerase (557 aa).

The active-site Proton donor is Glu-359. Active-site residues include His-390 and Lys-518.

This sequence belongs to the GPI family.

The protein localises to the cytoplasm. It carries out the reaction alpha-D-glucose 6-phosphate = beta-D-fructose 6-phosphate. Its pathway is carbohydrate biosynthesis; gluconeogenesis. The protein operates within carbohydrate degradation; glycolysis; D-glyceraldehyde 3-phosphate and glycerone phosphate from D-glucose: step 2/4. Its function is as follows. Catalyzes the reversible isomerization of glucose-6-phosphate to fructose-6-phosphate. This is Glucose-6-phosphate isomerase from Hahella chejuensis (strain KCTC 2396).